We begin with the raw amino-acid sequence, 224 residues long: Transcription cofactor HES-6 (224 aa).

A disordered region spans residues 1 to 31 (MAPSQAPSRDRAGQEDEDRWEARGDRKARKP). The span at 8 to 25 (SRDRAGQEDEDRWEARGD) shows a compositional bias: basic and acidic residues. The region spanning 25-77 (DRKARKPLVEKKRRARINESLQELRLLLAGTEVQAKLENAEVLELTVRRVQGA) is the bHLH domain. One can recognise an Orange domain in the interval 96–129 (FAAGYIQCMHEVHTFVSTCQAIDATVSAELLNHL). The segment at 146-209 (GDSLAGLPGG…GPDLVSTSLG (64 aa)) is disordered. The segment covering 158–171 (RSSWPPGGSPESPL) has biased composition (low complexity). Positions 181–190 (LCSDLEEIPE) are enriched in acidic residues. Positions 221–224 (WRPW) match the WRPW motif motif.

Transcription repression requires formation of a complex with a corepressor protein of the Groucho/TLE family. Interacts with HES1. In terms of tissue distribution, expressed in both undifferentiated and differentiated cells. High levels of expression are observed in several embryonic tissues including the nervous system, muscle and thymus. In the nervous system, initially expressed in the closing neural tube, then in the spinal cord, cranial and dorsal root ganglia, and brain neuroepithelium. Also expressed in epithelial cells of the embryonic respiratory, urinary and digestive systems. In the limb buds, expressed in skeletal muscle and presumptive tendons.

Its subcellular location is the nucleus. Does not bind DNA itself but suppresses both HES1-mediated N box-dependent transcriptional repression and binding of HES1 to E box sequences. Also suppresses HES1-mediated inhibition of the heterodimer formed by ASCL1/MASH1 and TCF3/E47, allowing ASCL1 and TCF3 to up-regulate transcription in its presence. Promotes cell differentiation. In Mus musculus (Mouse), this protein is Transcription cofactor HES-6.